The sequence spans 309 residues: Malate dehydrogenase (309 aa).

NAD(+)-binding positions include 7-12 and aspartate 32; that span reads GAGHVG. Positions 81 and 87 each coordinate substrate. NAD(+) is bound by residues asparagine 94 and 117–119; that span reads VSN. Substrate is bound by residues asparagine 119 and arginine 150. The active-site Proton acceptor is histidine 174.

This sequence belongs to the LDH/MDH superfamily. MDH type 3 family.

The enzyme catalyses (S)-malate + NAD(+) = oxaloacetate + NADH + H(+). In terms of biological role, catalyzes the reversible oxidation of malate to oxaloacetate. The protein is Malate dehydrogenase of Chlorobium phaeovibrioides (strain DSM 265 / 1930) (Prosthecochloris vibrioformis (strain DSM 265)).